The chain runs to 701 residues: Peptide transporter CstA (701 aa).

Over 1-6 (MNKSGK) the chain is Cytoplasmic. The chain crosses the membrane as a helical span at residues 7–27 (YLVWTVLSVMGAFALGYIALN). Topologically, residues 28–33 (RGEQIN) are periplasmic. Residues 34–54 (ALWIVVASVCIYLIAYRFYGL) traverse the membrane as a helical segment. Topologically, residues 55-86 (YIAKNVLAVDPTRMTPAVRHNDGLDYVPTDKK) are cytoplasmic. The chain crosses the membrane as a helical span at residues 87–107 (VLFGHHFAAIAGAGPLVGPVL). The Periplasmic segment spans residues 108–117 (AAQMGYLPGM). The chain crosses the membrane as a helical span at residues 118–138 (IWLLAGVVLAGAVQDFMVLFV). At 139–160 (STRRDGRSLGELVKEEMGPTAG) the chain is on the cytoplasmic side. Residues 161–181 (VIALVACFMIMVIILAVLAMI) form a helical membrane-spanning segment. The Periplasmic segment spans residues 182-189 (VVKALTHS). Residues 190–210 (PWGTYTVAFTIPLALFMGIYL) form a helical membrane-spanning segment. Residues 211 to 217 (RYLRPGR) lie on the Cytoplasmic side of the membrane. A helical transmembrane segment spans residues 218–238 (IGEVSVIGLVFLIFAIISGGW). The Periplasmic portion of the chain corresponds to 239-255 (VAESPTWAPYFDFTGVQ). A helical membrane pass occupies residues 256–276 (LTWMLVGYGFVAAVLPVWLLL). Over 277-280 (APRD) the chain is Cytoplasmic. Residues 281 to 301 (YLSTFLKIGTIVGLAVGILIM) traverse the membrane as a helical segment. At 302-324 (RPTLTMPALTKFVDGTGPVWTGN) the chain is on the periplasmic side. Residues 325 to 345 (LFPFLFITIACGAVSGFHALI) form a helical membrane-spanning segment. Residues 346–372 (SSGTTPKMLANEGQACFIGYGGMLMES) lie on the Cytoplasmic side of the membrane. The helical transmembrane segment at 373-393 (FVAIMALVSACIIDPGVYFAM) threads the bilayer. The Periplasmic segment spans residues 394 to 395 (NS). Residues 396 to 416 (PMAVLAPAGTADVVASAAQVV) form a helical membrane-spanning segment. Over 417 to 439 (SSWGFSITPDTLNQIASEVGEQS) the chain is Cytoplasmic. Residues 440–460 (IISRAGGAPTLAVGMAYILHG) form a helical membrane-spanning segment. Topologically, residues 461-463 (ALG) are periplasmic. A helical membrane pass occupies residues 464–484 (GMMDVAFWYHFAILFEALFIL). Topologically, residues 485 to 523 (TAVDAGTRAARFMLQDLLGVVSPGLKRTDSLPANLLATA) are cytoplasmic. The helical transmembrane segment at 524-544 (LCVLAWGYFLHQGVVDPLGGI) threads the bilayer. At 545-550 (NTLWPL) the chain is on the periplasmic side. Residues 551-571 (FGIANQMLAGMALMLCAVVLF) form a helical membrane-spanning segment. Topologically, residues 572-577 (KMKRQR) are cytoplasmic. Residues 578–598 (YAWVALVPTAWLLICTLTAGW) traverse the membrane as a helical segment. The Periplasmic segment spans residues 599–643 (QKAFSPDAKVGFLAIANKFQAMIDSGNIPSQYTESQLAQLVFNNR). The chain crosses the membrane as a helical span at residues 644-664 (LDAGLTIFFMVVVVVLALFSI). The Cytoplasmic segment spans residues 665 to 701 (KTALAALKDPKPTAKETPYEPMPENVEEIVAQAKGAH).

It belongs to the peptide transporter carbon starvation (CstA) (TC 2.A.114) family.

It is found in the cell inner membrane. In terms of biological role, involved in peptide utilization during carbon starvation. In Escherichia coli (strain K12), this protein is Peptide transporter CstA.